The sequence spans 359 residues: Peptide chain release factor 1 (359 aa).

The residue at position 233 (Q233) is an N5-methylglutamine.

Belongs to the prokaryotic/mitochondrial release factor family. In terms of processing, methylated by PrmC. Methylation increases the termination efficiency of RF1.

Its subcellular location is the cytoplasm. Functionally, peptide chain release factor 1 directs the termination of translation in response to the peptide chain termination codons UAG and UAA. The protein is Peptide chain release factor 1 of Orientia tsutsugamushi (strain Ikeda) (Rickettsia tsutsugamushi).